Consider the following 56-residue polypeptide: Protein YqiD (56 aa).

A helical transmembrane segment spans residues 2–22 (FIAWYWIVLIALVVVGYFLHL).

It localises to the cell inner membrane. This Escherichia coli (strain K12) protein is Protein YqiD.